A 426-amino-acid polypeptide reads, in one-letter code: Glutamate-1-semialdehyde 2,1-aminomutase (426 aa).

K265 carries the post-translational modification N6-(pyridoxal phosphate)lysine.

It belongs to the class-III pyridoxal-phosphate-dependent aminotransferase family. HemL subfamily. Homodimer. Pyridoxal 5'-phosphate is required as a cofactor.

It is found in the cytoplasm. It catalyses the reaction (S)-4-amino-5-oxopentanoate = 5-aminolevulinate. It participates in porphyrin-containing compound metabolism; protoporphyrin-IX biosynthesis; 5-aminolevulinate from L-glutamyl-tRNA(Glu): step 2/2. This is Glutamate-1-semialdehyde 2,1-aminomutase from Escherichia coli O7:K1 (strain IAI39 / ExPEC).